The sequence spans 365 residues: Zinc finger TRAF-type-containing protein 1-A (365 aa).

Residues 1–56 (MSEEREAPGPLASSSAGLGAEVGQEEVPGGAGPARLLLLPSDSDGPPKKRLRSEAE) form a disordered region. The RING-type; degenerate zinc-finger motif lies at 72–117 (CTVCLDLPKASVYQCTNGHLMCAGCFIHLLADSRLKEEQATCPNCR). Residues 113–186 (CPNCRCEISK…PWEGPYHELT (74 aa)) form a TRAF-type zinc finger.

Belongs to the ZFTRAF1 family.

The protein localises to the cytoplasm. The chain is Zinc finger TRAF-type-containing protein 1-A from Xenopus laevis (African clawed frog).